The primary structure comprises 1358 residues: MSYSYAEKKRIRKEFGVLPHILDVPYLLSIQTESYRKFLNADDAKGRLHSGLELVLKQSFPVESKNGQYELHYVDYQIGEPTFDETECQVRGATYDAPLNVKLRLVVYNKEALPSEKVVEDIREEYVYMGDIPLMTTNGTFIINGTERVVVSQLHRSPGVFFSKDDSEEGAFSARIIPYRGSWLDFEFDSKGIIWARIDRKRKFCATVILKALGYTQEEILNRFSDSKTISFNNKGFALKLDDLSSMKGEVLKFDIIDEKDNTIVKKNKKLTSRDIKKIKDAGVDSVAIDFDLVSTLRVAKDIVNEATGEVIAYANDDVTENLLEACVEAGMLELEVIDFITTERGRYISDTLKYDLTKNTDEALVEIYKVLRPGDPPAAASVKALFEGLFFIESRYSLSDIGRMKLNARLGSDNVSKDIYTLENSDIVGVIEELINIRDGKGKVDDIDHLGNRRVRSVGEMVENQFRIGLYRVEKGIRESMSLVHKDKLMPKDIVNSKPITAAIKEFFTSGALSQFMDQDNPLSEVTHKRRISALGPGGLSRDRAGFEVRDVHATHYGRLCPIETPEGPNIGLINSLASYARVNDYGFLEAPYRKVVNGKVTNEIEYLSAIDEDHYVIAQASTKLDKNNHFVEDLIQCRSGGEAIFTESSRVQYMDVSAKQMVSAAAALIPFLEHDDANRVLMGANMQRQAVPTLKSEKPLVGTGMEKIVARDSGNCIIARNAGEIAEVDSNRIVVKVDTEKSKTSKLVDIYSLTKFKRSNKNTCINQRPIVNVGDKIEAGDILADGFATDFGELSLGHNLMVAFMPWNGYNFEDSILLSERIVKDDKYTSIHIEEFTCVARDTKLGPEEVTADIPNVSESSLAKLDESGIVHIGANVEAGDILVAKITPKAEQQLTPEERLLRAIFNEKASNVADSSLRMPSGTSGTVINVQVFENDKGGKSKRALKIEKELIDKARKDFDEEFAVIESVVKSSIETDVIGAKIQKAKGLKKGAVLTKEFLATLPFSKWLEISFEDEKLEQKVQNAREYYEEAKIAVDARFEAKKKSIMQSNELSPGVLKTVKVFVAIKKRIQPGDKMAGRHGNKGVVSRVLPVEDMPYMEDGTPVDVCLNPLGIPSRMNIGQILEAHLGLASYGLGKKIEQTLEKTRKAAELRKTLEEVYNSVGDKKVDLKALNDEEILNLCENLKGGVPIATPVFDGAKEEDIKSLLKIGGFATNGQMKLFDGRTGKPFDRHVTVGYMYMLKLDHLVDDKMHARSTGSYSLVTQQPLGGKAQFGGQRFGEMEVWALQAYGAAYTLREMLTVKSDDITGRSKMYKNIVDGKLTMNVDVPESFNVLRNEVRALGIDMDFDYSSEEE.

Belongs to the RNA polymerase beta chain family. As to quaternary structure, the RNAP catalytic core consists of 2 alpha, 1 beta, 1 beta' and 1 omega subunit. When a sigma factor is associated with the core the holoenzyme is formed, which can initiate transcription.

The catalysed reaction is RNA(n) + a ribonucleoside 5'-triphosphate = RNA(n+1) + diphosphate. In terms of biological role, DNA-dependent RNA polymerase catalyzes the transcription of DNA into RNA using the four ribonucleoside triphosphates as substrates. The protein is DNA-directed RNA polymerase subunit beta of Francisella philomiragia subsp. philomiragia (strain ATCC 25017 / CCUG 19701 / FSC 153 / O#319-036).